Reading from the N-terminus, the 271-residue chain is Gap junction beta-5 protein (271 aa).

The Cytoplasmic segment spans residues 1–20 (MNWSVFEGLLSGVNKYSTAF). The helical transmembrane segment at 21-40 (GRIWLSLVFVFRVLVYLVTA) threads the bilayer. Topologically, residues 41-75 (ERVWGDDQKDFDCNTRQPGCTNVCYDEFFPVSHVR) are extracellular. The chain crosses the membrane as a helical span at residues 76–98 (LWALQLILVTCPSLLVVMHVAYR). The Cytoplasmic segment spans residues 99–124 (KAREKKYQQEVGKGYLYPNPGKKRGG). The chain crosses the membrane as a helical span at residues 125–147 (LWWTYVCSLLFKATIDIIFLYLF). Over 148-182 (HAFYPRYTLPSMVKCHSAPCPNTVDCFIAKPSEKN) the chain is Extracellular. The helical transmembrane segment at 183–205 (IFIVFMLVTAIVCILLNLVELLY) threads the bilayer. Over 206 to 271 (LVIKRCSECA…PRAHVKKTIL (66 aa)) the chain is Cytoplasmic. Positions 217-237 (AKRPPTAHAKNDPNWANPSSK) are disordered.

This sequence belongs to the connexin family. Beta-type (group I) subfamily. A connexon is composed of a hexamer of connexins. In terms of tissue distribution, expressed in skin.

The protein localises to the cell membrane. The protein resides in the cell junction. It is found in the gap junction. In terms of biological role, one gap junction consists of a cluster of closely packed pairs of transmembrane channels, the connexons, through which materials of low MW diffuse from one cell to a neighboring cell. In Rattus norvegicus (Rat), this protein is Gap junction beta-5 protein (Gjb5).